A 451-amino-acid chain; its full sequence is DNA polymerase IV (451 aa).

The UmuC domain occupies 5–187 (VIHVDMDAFF…LPVGRLWGVG (183 aa)). Asp9 and Asp104 together coordinate Mg(2+). The active site involves Glu105.

Belongs to the DNA polymerase type-Y family. As to quaternary structure, monomer. The cofactor is Mg(2+).

The protein resides in the cytoplasm. The enzyme catalyses DNA(n) + a 2'-deoxyribonucleoside 5'-triphosphate = DNA(n+1) + diphosphate. Functionally, poorly processive, error-prone DNA polymerase involved in untargeted mutagenesis. Copies undamaged DNA at stalled replication forks, which arise in vivo from mismatched or misaligned primer ends. These misaligned primers can be extended by PolIV. Exhibits no 3'-5' exonuclease (proofreading) activity. May be involved in translesional synthesis, in conjunction with the beta clamp from PolIII. This chain is DNA polymerase IV, found in Corynebacterium diphtheriae (strain ATCC 700971 / NCTC 13129 / Biotype gravis).